A 121-amino-acid polypeptide reads, in one-letter code: Histone H2B.6 (121 aa).

Residues 1–28 form a disordered region; that stretch reads MAPKAEKKPKVEKRVPGKEGETSKKKAK. Lys-7 and Lys-13 each carry N6-acetyllysine.

The protein belongs to the histone H2B family. The nucleosome is a histone octamer containing two molecules each of H2A, H2B, H3 and H4 assembled in one H3-H4 heterotetramer and two H2A-H2B heterodimers. The octamer wraps approximately 147 bp of DNA. In terms of processing, can be acetylated to form H2BK6ac and H2BK33ac. In terms of tissue distribution, expressed preferentially in meristematic tissues.

Its subcellular location is the nucleus. The protein localises to the chromosome. Functionally, core component of nucleosome. Nucleosomes wrap and compact DNA into chromatin, limiting DNA accessibility to the cellular machineries which require DNA as a template. Histones thereby play a central role in transcription regulation, DNA repair, DNA replication and chromosomal stability. DNA accessibility is regulated via a complex set of post-translational modifications of histones, also called histone code, and nucleosome remodeling. In Triticum aestivum (Wheat), this protein is Histone H2B.6 (TH123).